A 375-amino-acid chain; its full sequence is DNA replication and repair protein RecF (375 aa).

Residue 30–37 (GDNAQGKS) participates in ATP binding.

The protein belongs to the RecF family.

The protein resides in the cytoplasm. In terms of biological role, the RecF protein is involved in DNA metabolism; it is required for DNA replication and normal SOS inducibility. RecF binds preferentially to single-stranded, linear DNA. It also seems to bind ATP. The sequence is that of DNA replication and repair protein RecF from Gloeobacter violaceus (strain ATCC 29082 / PCC 7421).